The following is a 504-amino-acid chain: Multicopper oxidase MmcO (504 aa).

Residues 1-44 constitute a signal peptide (tat-type signal); sequence MPELATSGNAFDKRRFSRRGFLGAGIASGFALAACASKPTASGA. 4 residues coordinate Cu cation: H120, H122, H161, and H163. One can recognise a Plastocyanin-like domain in the interval 190 to 349; that stretch reads EWIIILDDWT…NALARALLST (160 aa). The Cu cation site is built by H437, H440, H442, H485, C486, H487, and H491.

Belongs to the multicopper oxidase family. Cu cation is required as a cofactor. In terms of processing, predicted to be exported by the Tat system. The position of the signal peptide cleavage has not been experimentally proven.

It localises to the cell inner membrane. Its subcellular location is the periplasm. It catalyses the reaction 4 Fe(2+) + O2 + 4 H(+) = 4 Fe(3+) + 2 H2O. Its function is as follows. Required for copper resistance. In vitro, oxidizes organic substrates and Fe(2+). May act in vivo by oxidation of toxic periplasmic Cu(+). This chain is Multicopper oxidase MmcO, found in Mycobacterium tuberculosis (strain ATCC 25618 / H37Rv).